The chain runs to 353 residues: Mitochondrial distribution and morphology protein 12 (353 aa).

Residues 1–330 (MSFDIKWENL…WPSWICLDMN (330 aa)) enclose the SMP-LTD domain. 3 stretches are compositionally biased toward acidic residues: residues 64-75 (DEFYEDTTDSPE), 84-103 (TGDD…DDDG), and 330-342 (NDDD…EENP). Disordered stretches follow at residues 64–140 (DEFY…NRSR) and 330–353 (NDDD…HVGS).

The protein belongs to the MDM12 family. Component of the ER-mitochondria encounter structure (ERMES) or MDM complex, composed of MMM1, MDM10, MDM12 and MDM34. An MMM1 homodimer associates with one molecule of MDM12 on each side in a pairwise head-to-tail manner, and the SMP-LTD domains of MMM1 and MDM12 generate a continuous hydrophobic tunnel for phospholipid trafficking.

The protein resides in the mitochondrion outer membrane. It localises to the endoplasmic reticulum membrane. Its function is as follows. Component of the ERMES/MDM complex, which serves as a molecular tether to connect the endoplasmic reticulum (ER) and mitochondria. Components of this complex are involved in the control of mitochondrial shape and protein biogenesis, and function in nonvesicular lipid trafficking between the ER and mitochondria. MDM12 is required for the interaction of the ER-resident membrane protein MMM1 and the outer mitochondrial membrane-resident beta-barrel protein MDM10. The MDM12-MMM1 subcomplex functions in the major beta-barrel assembly pathway that is responsible for biogenesis of all mitochondrial outer membrane beta-barrel proteins, and acts in a late step after the SAM complex. The MDM10-MDM12-MMM1 subcomplex further acts in the TOM40-specific pathway after the action of the MDM12-MMM1 complex. Essential for establishing and maintaining the structure of mitochondria and maintenance of mtDNA nucleoids. In Candida tropicalis (strain ATCC MYA-3404 / T1) (Yeast), this protein is Mitochondrial distribution and morphology protein 12.